The following is a 261-amino-acid chain: DNA repair protein RecO (261 aa).

This sequence belongs to the RecO family.

Involved in DNA repair and RecF pathway recombination. This chain is DNA repair protein RecO, found in Chlorobium phaeobacteroides (strain BS1).